Reading from the N-terminus, the 536-residue chain is G-protein coupled receptor Mth2 (536 aa).

Topologically, residues 1 to 210 (MAERDHYHTI…DDNSTVKIIN (210 aa)) are extracellular. 5 disulfides stabilise this stretch: Cys17–Cys71, Cys73–Cys78, Cys82–Cys177, Cys83–Cys96, and Cys138–Cys197. N-linked (GlcNAc...) asparagine glycosylation is found at Asn24 and Asn33. Asn103, Asn113, Asn118, Asn159, Asn184, and Asn203 each carry an N-linked (GlcNAc...) asparagine glycan. Residues 211 to 231 (AYAMMFSIPFMMLTIAVYLLI) form a helical membrane-spanning segment. The Cytoplasmic segment spans residues 232-241 (PELRNQHGKS). Residues 242-262 (LVCYLVGLTVGYTSLCYVQLY) form a helical membrane-spanning segment. Topologically, residues 263-273 (QVDATGDACKV) are extracellular. A helical membrane pass occupies residues 274 to 294 (FGYTAYFFFMGAYMWLSVISF). Residues 295–314 (DLWHNFRGTRGINRFQEKKR) lie on the Cytoplasmic side of the membrane. A helical transmembrane segment spans residues 315-335 (FLFYSLYSWGIAVVFLAFTYI). Residues 336 to 365 (AQELTNLPAYLKPGIGDGVYCWLDMSNWAA) lie on the Extracellular side of the membrane. The helical transmembrane segment at 366 to 386 (MIYFYGPILVIVVANTIMFIM) threads the bilayer. At 387–417 (TAIKIHGVQREMARIIASENSTKNLRTEKDK) the chain is on the cytoplasmic side. A helical transmembrane segment spans residues 418–438 (FGLFLRLFLIMGITWLTELIS). Residues 439–449 (YFVGSDKGWSK) are Extracellular-facing. Residues 450–470 (LFYISDLANAMQGFLIFMLFV) form a helical membrane-spanning segment. Residues 471 to 536 (MKKKVKHLIT…VDPQKTTIFR (66 aa)) are Cytoplasmic-facing. Positions 487–506 (RDGSNQRQSQYSTKTTSSSV) are disordered. A compositionally biased stretch (low complexity) spans 492-505 (QRQSQYSTKTTSSS).

It belongs to the G-protein coupled receptor 2 family. Mth subfamily. In terms of assembly, homodimer.

The protein resides in the cell membrane. Involved in biological aging and stress response. Essential for adult survival. This Drosophila yakuba (Fruit fly) protein is G-protein coupled receptor Mth2 (mth2).